Here is a 163-residue protein sequence, read N- to C-terminus: tRNA-acetylating toxin 2 (163 aa).

Residues L89, V91, H96, G97, Q98, G99, A101, R102, and E132 each coordinate acetyl-CoA. The active site involves Y137. Acetyl-CoA is bound at residue R139.

Belongs to the acetyltransferase family. GNAT subfamily. As to quaternary structure, homodimer (in absence of antitoxin). Forms a complex with cognate antitoxin TacA2. Forms a 4:2 antitoxin:toxin complex with cognate antitoxin TacA2.

It catalyses the reaction glycyl-tRNA(Gly) + acetyl-CoA = N-acetylglycyl-tRNA(Gly) + CoA + H(+). Toxic component of a type II toxin-antitoxin (TA) system. Acetylates tRNA and inhibits translation. Acetylates exclusively Gly in situ. Overexpression during the lag phase of a tacA2-tacT2 deletion strain leads to very small increase in persister cells in the presence of cefotaxime but no detectable growth phenotype in absence of antibiotics. Compared to a protein with a single amino acid change (TacT2 from S.enterica NCTC 13349, Glu-29 is Lys in NCTC 13349) this protein binds tRNA very poorly and acetylates tRNA very poorly. Persister cell formation is neutralized by cognate antitoxin TacA2. Neutralized only by cognate antitoxin TacA2 (A8), but not by TacA1 or TacA3. Plays a role in persister cell formation. Its function is as follows. The TacA2-TacT2 complex both represses and derepresses expression of its own operon. This is tRNA-acetylating toxin 2 from Salmonella typhimurium (strain 14028s / SGSC 2262).